A 487-amino-acid polypeptide reads, in one-letter code: V-type proton ATPase subunit B2 (487 aa).

An N-acetylglycine modification is found at Gly-2.

This sequence belongs to the ATPase alpha/beta chains family. V-ATPase is a heteromultimeric enzyme composed of a peripheral catalytic V1 complex (components A to H) attached to an integral membrane V0 proton pore complex (components: a, c, c'', d and e).

It is found in the vacuole membrane. Non-catalytic subunit of the peripheral V1 complex of vacuolar ATPase. V-ATPase is responsible for acidifying a variety of intracellular compartments in eukaryotic cells. The polypeptide is V-type proton ATPase subunit B2 (VHA-B2) (Arabidopsis thaliana (Mouse-ear cress)).